Reading from the N-terminus, the 205-residue chain is Protein N-terminal glutamine amidohydrolase (205 aa).

Active-site residues include Cys-20, His-74, and Asp-90.

This sequence belongs to the NTAQ1 family. As to quaternary structure, monomer.

The catalysed reaction is N-terminal L-glutaminyl-[protein] + H2O = N-terminal L-glutamyl-[protein] + NH4(+). In terms of biological role, mediates the side-chain deamidation of N-terminal glutamine residues to glutamate, an important step in N-end rule pathway of protein degradation. Conversion of the resulting N-terminal glutamine to glutamate renders the protein susceptible to arginylation, polyubiquitination and degradation as specified by the N-end rule. Does not act on substrates with internal or C-terminal glutamine and does not act on non-glutamine residues in any position. The polypeptide is Protein N-terminal glutamine amidohydrolase (tun) (Drosophila erecta (Fruit fly)).